Reading from the N-terminus, the 189-residue chain is Xanthine phosphoribosyltransferase (189 aa).

Xanthine is bound by residues leucine 20 and asparagine 27. 5-phospho-alpha-D-ribose 1-diphosphate is bound at residue 127–131; sequence AYGNA. Lysine 155 is a binding site for xanthine.

This sequence belongs to the purine/pyrimidine phosphoribosyltransferase family. Xpt subfamily. As to quaternary structure, homodimer.

The protein resides in the cytoplasm. It carries out the reaction XMP + diphosphate = xanthine + 5-phospho-alpha-D-ribose 1-diphosphate. The protein operates within purine metabolism; XMP biosynthesis via salvage pathway; XMP from xanthine: step 1/1. Functionally, converts the preformed base xanthine, a product of nucleic acid breakdown, to xanthosine 5'-monophosphate (XMP), so it can be reused for RNA or DNA synthesis. In Bacteroides fragilis (strain ATCC 25285 / DSM 2151 / CCUG 4856 / JCM 11019 / LMG 10263 / NCTC 9343 / Onslow / VPI 2553 / EN-2), this protein is Xanthine phosphoribosyltransferase.